A 337-amino-acid polypeptide reads, in one-letter code: Glyceraldehyde-3-phosphate dehydrogenase (337 aa).

Residues 11-12 (RI), aspartate 33, and lysine 78 each bind NAD(+). D-glyceraldehyde 3-phosphate-binding positions include 149–151 (SCT), threonine 180, 209–210 (TG), and arginine 232. Cysteine 150 (nucleophile) is an active-site residue. Asparagine 314 contacts NAD(+).

The protein belongs to the glyceraldehyde-3-phosphate dehydrogenase family. As to quaternary structure, homotetramer.

The protein resides in the cytoplasm. It catalyses the reaction D-glyceraldehyde 3-phosphate + phosphate + NAD(+) = (2R)-3-phospho-glyceroyl phosphate + NADH + H(+). It functions in the pathway carbohydrate degradation; glycolysis; pyruvate from D-glyceraldehyde 3-phosphate: step 1/5. This is Glyceraldehyde-3-phosphate dehydrogenase (GPD) from Lyophyllum shimeji (Hon-shimeji).